A 1013-amino-acid chain; its full sequence is Adhesion G-protein coupled receptor G2 (1013 aa).

An N-terminal signal peptide occupies residues 1 to 37; it reads MLFSGGQYSPVGRPEEVLLIYKIFLVIICFHAILVTS. Over 38 to 623 the chain is Extracellular; that stretch reads LKENAGNSSL…TSLPPSQMMA (586 aa). N-linked (GlcNAc...) asparagine glycans are attached at residues Asn-44, Asn-78, Asn-92, Asn-104, Asn-128, Asn-137, Asn-155, Asn-179, Asn-187, Asn-366, Asn-431, Asn-452, Asn-457, Asn-524, Asn-538, Asn-543, Asn-547, and Asn-593. In terms of domain architecture, GAIN-B spans 457-615; the sequence is NTTTFAAQDP…GILLDLSRTS (159 aa). 2 disulfides stabilise this stretch: Cys-566-Cys-597 and Cys-585-Cys-599. Positions 566–615 are GPS; it reads CVFWDLNRNGGRGGWSSDGCSVKEKRMNETICTCSHLTSFGILLDLSRTS. The tract at residues 604–615 is stachel; the sequence is SFGILLDLSRTS. A helical transmembrane segment spans residues 624–644; the sequence is LTFITYIGCGLSSIFLSVTLV. Residues 645–663 are Cytoplasmic-facing; sequence TYIAFEKIRRDYPSKILIQ. The chain crosses the membrane as a helical span at residues 664–684; sequence LCAALLLLNLVFLLDSWIALY. Residues 685–688 lie on the Extracellular side of the membrane; that stretch reads NARG. A helical transmembrane segment spans residues 689–709; sequence FCISVAVFLHYFLLVSFTWMG. Cysteines 690 and 774 form a disulfide. Over 710–733 the chain is Cytoplasmic; it reads LEAFHMYLALVKVFNTYIRKYILK. A helical membrane pass occupies residues 734–754; the sequence is FCIVGWGIPAVVVSIVLTISP. Topologically, residues 755 to 785 are extracellular; that stretch reads DNYGIGSYGKFPNGTPDDFCWINSSVVFYIT. Asn-777 is a glycosylation site (N-linked (GlcNAc...) asparagine). The chain crosses the membrane as a helical span at residues 786 to 806; sequence VVGYFCVIFLLNVSMFIVVLV. At 807–830 the chain is on the cytoplasmic side; it reads QLCRIKKKKQLGAQRKTSIQDLRS. A helical membrane pass occupies residues 831-851; sequence IAGLTFLLGITWGFAFFAWGP. The Extracellular segment spans residues 852–853; sequence VN. The N-linked (GlcNAc...) asparagine glycan is linked to Asn-853. A helical transmembrane segment spans residues 854 to 874; the sequence is LTFMYLFAIFNTLQGFFIFIF. Asn-864 contacts 3beta-hydroxyandrost-5-en-17-one. Topologically, residues 875–1013 are cytoplasmic; that stretch reads YCAAKENVRK…RGSLHFIEQM (139 aa). Phosphoserine is present on Ser-1006.

The protein belongs to the G-protein coupled receptor 2 family. Adhesion G-protein coupled receptor (ADGR) subfamily. As to quaternary structure, heterodimer of 2 chains generated by proteolytic processing; the large extracellular N-terminal fragment and the membrane-bound C-terminal fragment predominantly remain associated and non-covalently linked. Interacts with CFTR. Proteolytically cleaved into 2 subunits, an extracellular subunit and a seven-transmembrane subunit. Post-translationally, highly glycosylated. Epididymis-specific expression (at protein level). Associated with apical membranes of efferent ductule and proximal epididymal duct epithelia.

Its subcellular location is the apical cell membrane. With respect to regulation, forms a heterodimer of 2 chains generated by proteolytic processing that remain associated through non-covalent interactions mediated by the GAIN-B domain. In the inactivated receptor, the Stachel sequence (also named stalk) is embedded in the GAIN-B domain, where it adopts a beta-strand conformation. On activation, the Stachel moves into the 7 transmembrane region and adopts a twisted hook-shaped configuration that forms contacts within the receptor, leading to coupling of a G-alpha protein, which activates signaling. The cleaved GAIN-B and N-terminal domains can then dissociate from the rest of the receptor. Deoxycorticosterone (DOC) acts as an antagonist of ADGRG2. Its function is as follows. Adhesion G-protein coupled receptor (aGPCR) for steroid hormones, such as dehydroepiandrosterone (DHEA; also named 3beta-hydroxyandrost-5-en-17-one) and androstenedione. Involved in a signal transduction pathway controlling epididymal function and male fertility. Ligand binding causes a conformation change that triggers signaling via guanine nucleotide-binding proteins (G proteins) and modulates the activity of downstream effectors, such as adenylate cyclase. ADGRG2 is coupled to G(s) G proteins and mediates activation of adenylate cyclase activity. Also able to couple with G(q) G proteins in vitro. May regulate fluid exchange within epididymis. This is Adhesion G-protein coupled receptor G2 from Rattus norvegicus (Rat).